A 454-amino-acid chain; its full sequence is Pup--protein ligase (454 aa).

E9 is a Mg(2+) binding site. R53 lines the ATP pocket. Y55 lines the Mg(2+) pocket. The active-site Proton acceptor is the D57. Position 63 (E63) interacts with Mg(2+). ATP contacts are provided by T66 and W421.

It belongs to the Pup ligase/Pup deamidase family. Pup-conjugating enzyme subfamily.

It carries out the reaction ATP + [prokaryotic ubiquitin-like protein]-L-glutamate + [protein]-L-lysine = ADP + phosphate + N(6)-([prokaryotic ubiquitin-like protein]-gamma-L-glutamyl)-[protein]-L-lysine.. The protein operates within protein degradation; proteasomal Pup-dependent pathway. It participates in protein modification; protein pupylation. Catalyzes the covalent attachment of the prokaryotic ubiquitin-like protein modifier Pup to the proteasomal substrate proteins, thereby targeting them for proteasomal degradation. This tagging system is termed pupylation. The ligation reaction involves the side-chain carboxylate of the C-terminal glutamate of Pup and the side-chain amino group of a substrate lysine. The chain is Pup--protein ligase from Frankia casuarinae (strain DSM 45818 / CECT 9043 / HFP020203 / CcI3).